A 156-amino-acid polypeptide reads, in one-letter code: ATP synthase subunit b (156 aa).

A helical transmembrane segment spans residues 7–27 (LFAQMIVFFVLWWVVARFVWP).

It belongs to the ATPase B chain family. As to quaternary structure, F-type ATPases have 2 components, F(1) - the catalytic core - and F(0) - the membrane proton channel. F(1) has five subunits: alpha(3), beta(3), gamma(1), delta(1), epsilon(1). F(0) has three main subunits: a(1), b(2) and c(10-14). The alpha and beta chains form an alternating ring which encloses part of the gamma chain. F(1) is attached to F(0) by a central stalk formed by the gamma and epsilon chains, while a peripheral stalk is formed by the delta and b chains.

It localises to the cell inner membrane. In terms of biological role, f(1)F(0) ATP synthase produces ATP from ADP in the presence of a proton or sodium gradient. F-type ATPases consist of two structural domains, F(1) containing the extramembraneous catalytic core and F(0) containing the membrane proton channel, linked together by a central stalk and a peripheral stalk. During catalysis, ATP synthesis in the catalytic domain of F(1) is coupled via a rotary mechanism of the central stalk subunits to proton translocation. Its function is as follows. Component of the F(0) channel, it forms part of the peripheral stalk, linking F(1) to F(0). This chain is ATP synthase subunit b, found in Polynucleobacter necessarius subsp. necessarius (strain STIR1).